Consider the following 339-residue polypeptide: Phosphoribosylformylglycinamidine cyclo-ligase (339 aa).

This sequence belongs to the AIR synthase family.

Its subcellular location is the cytoplasm. The catalysed reaction is 2-formamido-N(1)-(5-O-phospho-beta-D-ribosyl)acetamidine + ATP = 5-amino-1-(5-phospho-beta-D-ribosyl)imidazole + ADP + phosphate + H(+). It participates in purine metabolism; IMP biosynthesis via de novo pathway; 5-amino-1-(5-phospho-D-ribosyl)imidazole from N(2)-formyl-N(1)-(5-phospho-D-ribosyl)glycinamide: step 2/2. In Desulfitobacterium hafniense (strain DSM 10664 / DCB-2), this protein is Phosphoribosylformylglycinamidine cyclo-ligase.